Consider the following 269-residue polypeptide: MPELPEVETSRRGIEPHLVGATILHAVVRNGRLRWPVSEEIYRLSDVPVLSVRRRAKYLLLELPDGWIIVHLGMSGSLRILSEELPAEKHDHVDLVMSNGKVLRYTDPRRFGAWLWTRTLEGHPVLAHLGPEPLSDAFNADYLQQKCAKKKTAIKPWLMDNKLVVGVGNIYASESLFSAGIHPDRLASSLSREECEQLVKVIKLVLLRSIEQGGTTLKDFLQSDGKPGYFAQELQVYGRKGEPCRICGMPVVGTKHAQRATFYCRQCQK.

Residue proline 2 is the Schiff-base intermediate with DNA of the active site. Glutamate 3 serves as the catalytic Proton donor. The active-site Proton donor; for beta-elimination activity is the lysine 57. Residues histidine 90, arginine 109, and lysine 150 each coordinate DNA. Residues 235–269 (QVYGRKGEPCRICGMPVVGTKHAQRATFYCRQCQK) form an FPG-type zinc finger. Arginine 259 (proton donor; for delta-elimination activity) is an active-site residue.

The protein belongs to the FPG family. In terms of assembly, monomer. Requires Zn(2+) as cofactor.

The enzyme catalyses Hydrolysis of DNA containing ring-opened 7-methylguanine residues, releasing 2,6-diamino-4-hydroxy-5-(N-methyl)formamidopyrimidine.. It catalyses the reaction 2'-deoxyribonucleotide-(2'-deoxyribose 5'-phosphate)-2'-deoxyribonucleotide-DNA = a 3'-end 2'-deoxyribonucleotide-(2,3-dehydro-2,3-deoxyribose 5'-phosphate)-DNA + a 5'-end 5'-phospho-2'-deoxyribonucleoside-DNA + H(+). Functionally, involved in base excision repair of DNA damaged by oxidation or by mutagenic agents. Acts as a DNA glycosylase that recognizes and removes damaged bases. Has a preference for oxidized purines, such as 7,8-dihydro-8-oxoguanine (8-oxoG). Has AP (apurinic/apyrimidinic) lyase activity and introduces nicks in the DNA strand. Cleaves the DNA backbone by beta-delta elimination to generate a single-strand break at the site of the removed base with both 3'- and 5'-phosphates. The sequence is that of Formamidopyrimidine-DNA glycosylase from Klebsiella pneumoniae subsp. pneumoniae (strain ATCC 700721 / MGH 78578).